A 197-amino-acid chain; its full sequence is Transcription factor FapR (197 aa).

The protein belongs to the FapR family.

In terms of biological role, transcriptional factor involved in regulation of membrane lipid biosynthesis by repressing genes involved in fatty acid and phospholipid metabolism. The chain is Transcription factor FapR from Bacillus cereus (strain B4264).